Consider the following 400-residue polypeptide: Phosphoglycerate kinase (400 aa).

Substrate is bound by residues 21–23 (DFN), Arg-37, 60–63 (HFGR), Arg-119, and Arg-152. ATP contacts are provided by residues Lys-205, Gly-296, Glu-327, and 353-356 (GGDT).

The protein belongs to the phosphoglycerate kinase family. Monomer.

It is found in the cytoplasm. It catalyses the reaction (2R)-3-phosphoglycerate + ATP = (2R)-3-phospho-glyceroyl phosphate + ADP. It participates in carbohydrate degradation; glycolysis; pyruvate from D-glyceraldehyde 3-phosphate: step 2/5. The polypeptide is Phosphoglycerate kinase (Aliarcobacter butzleri (strain RM4018) (Arcobacter butzleri)).